Here is a 119-residue protein sequence, read N- to C-terminus: Holo-[acyl-carrier-protein] synthase (119 aa).

Positions 8 and 59 each coordinate Mg(2+).

It belongs to the P-Pant transferase superfamily. AcpS family. The cofactor is Mg(2+).

It localises to the cytoplasm. It catalyses the reaction apo-[ACP] + CoA = holo-[ACP] + adenosine 3',5'-bisphosphate + H(+). Transfers the 4'-phosphopantetheine moiety from coenzyme A to a Ser of acyl-carrier-protein. The sequence is that of Holo-[acyl-carrier-protein] synthase from Lactococcus lactis subsp. cremoris (strain SK11).